The sequence spans 798 residues: Protocadherin beta-10 (798 aa).

A signal peptide spans 1-26 (MAVRELCFSRQRQVLFLFLFWGVSLA). At 27 to 690 (GSGFGRYSVT…AQADLLTVYL (664 aa)) the chain is on the extracellular side. Cadherin domains are found at residues 35–133 (VTEE…APVF), 138–242 (TVLK…APQF), 247–347 (YETQ…PPEL), 352–451 (FSNS…APAF), and 456–561 (YTLF…SPFV). N-linked (GlcNAc...) asparagine glycosylation is present at asparagine 169. 2 N-linked (GlcNAc...) asparagine glycosylation sites follow: asparagine 418 and asparagine 436. A glycan (N-linked (GlcNAc...) asparagine) is linked at asparagine 567. The region spanning 568-671 (GSAPCTELVP…LVDGFSQPYL (104 aa)) is the Cadherin 6 domain. A helical membrane pass occupies residues 691-711 (VVALASVSSLFLFSVLLFVAV). Topologically, residues 712–798 (RLCRRSRAAS…FRNSFGFNIQ (87 aa)) are cytoplasmic.

It localises to the cell membrane. In terms of biological role, potential calcium-dependent cell-adhesion protein. May be involved in the establishment and maintenance of specific neuronal connections in the brain. The protein is Protocadherin beta-10 (PCDHB10) of Pan troglodytes (Chimpanzee).